A 212-amino-acid polypeptide reads, in one-letter code: Thiamine-phosphate synthase (212 aa).

Residues 40 to 44 (QFREK) and Asn-75 each bind 4-amino-2-methyl-5-(diphosphooxymethyl)pyrimidine. 2 residues coordinate Mg(2+): Asp-76 and Asp-95. Residue Ser-113 coordinates 4-amino-2-methyl-5-(diphosphooxymethyl)pyrimidine. 139-141 (TTS) serves as a coordination point for 2-[(2R,5Z)-2-carboxy-4-methylthiazol-5(2H)-ylidene]ethyl phosphate. Lys-142 contacts 4-amino-2-methyl-5-(diphosphooxymethyl)pyrimidine. 2-[(2R,5Z)-2-carboxy-4-methylthiazol-5(2H)-ylidene]ethyl phosphate is bound by residues Gly-171 and 191-192 (IS).

Belongs to the thiamine-phosphate synthase family. The cofactor is Mg(2+).

It carries out the reaction 2-[(2R,5Z)-2-carboxy-4-methylthiazol-5(2H)-ylidene]ethyl phosphate + 4-amino-2-methyl-5-(diphosphooxymethyl)pyrimidine + 2 H(+) = thiamine phosphate + CO2 + diphosphate. The catalysed reaction is 2-(2-carboxy-4-methylthiazol-5-yl)ethyl phosphate + 4-amino-2-methyl-5-(diphosphooxymethyl)pyrimidine + 2 H(+) = thiamine phosphate + CO2 + diphosphate. It catalyses the reaction 4-methyl-5-(2-phosphooxyethyl)-thiazole + 4-amino-2-methyl-5-(diphosphooxymethyl)pyrimidine + H(+) = thiamine phosphate + diphosphate. It participates in cofactor biosynthesis; thiamine diphosphate biosynthesis; thiamine phosphate from 4-amino-2-methyl-5-diphosphomethylpyrimidine and 4-methyl-5-(2-phosphoethyl)-thiazole: step 1/1. Functionally, condenses 4-methyl-5-(beta-hydroxyethyl)thiazole monophosphate (THZ-P) and 2-methyl-4-amino-5-hydroxymethyl pyrimidine pyrophosphate (HMP-PP) to form thiamine monophosphate (TMP). The sequence is that of Thiamine-phosphate synthase from Staphylococcus saprophyticus subsp. saprophyticus (strain ATCC 15305 / DSM 20229 / NCIMB 8711 / NCTC 7292 / S-41).